The chain runs to 166 residues: Crossover junction endodeoxyribonuclease RuvC (166 aa).

Residues Asp11, Glu70, and Asp142 contribute to the active site. Asp11, Glu70, and Asp142 together coordinate Mg(2+).

Belongs to the RuvC family. As to quaternary structure, homodimer which binds Holliday junction (HJ) DNA. The HJ becomes 2-fold symmetrical on binding to RuvC with unstacked arms; it has a different conformation from HJ DNA in complex with RuvA. In the full resolvosome a probable DNA-RuvA(4)-RuvB(12)-RuvC(2) complex forms which resolves the HJ. The cofactor is Mg(2+).

The protein localises to the cytoplasm. The enzyme catalyses Endonucleolytic cleavage at a junction such as a reciprocal single-stranded crossover between two homologous DNA duplexes (Holliday junction).. Its function is as follows. The RuvA-RuvB-RuvC complex processes Holliday junction (HJ) DNA during genetic recombination and DNA repair. Endonuclease that resolves HJ intermediates. Cleaves cruciform DNA by making single-stranded nicks across the HJ at symmetrical positions within the homologous arms, yielding a 5'-phosphate and a 3'-hydroxyl group; requires a central core of homology in the junction. The consensus cleavage sequence is 5'-(A/T)TT(C/G)-3'. Cleavage occurs on the 3'-side of the TT dinucleotide at the point of strand exchange. HJ branch migration catalyzed by RuvA-RuvB allows RuvC to scan DNA until it finds its consensus sequence, where it cleaves and resolves the cruciform DNA. This is Crossover junction endodeoxyribonuclease RuvC from Nitratidesulfovibrio vulgaris (strain ATCC 29579 / DSM 644 / CCUG 34227 / NCIMB 8303 / VKM B-1760 / Hildenborough) (Desulfovibrio vulgaris).